The chain runs to 384 residues: Substance-K receptor (384 aa).

At methionine 1–glutamine 32 the chain is on the extracellular side. N-linked (GlcNAc...) asparagine glycosylation is present at asparagine 19. A helical transmembrane segment spans residues leucine 33–tryptophan 56. Residues isoleucine 57–asparagine 69 lie on the Cytoplasmic side of the membrane. The helical transmembrane segment at tyrosine 70 to asparagine 90 threads the bilayer. Over phenylalanine 91 to tyrosine 107 the chain is Extracellular. Residues cysteine 106 and cysteine 181 are joined by a disulfide bond. Residues phenylalanine 108–alanine 129 form a helical membrane-spanning segment. Over aspartate 130–lysine 149 the chain is Cytoplasmic. A helical transmembrane segment spans residues alanine 150–serine 170. Residues threonine 171–leucine 196 are Extracellular-facing. A helical transmembrane segment spans residues tyrosine 197–serine 218. Topologically, residues valine 219 to alanine 251 are cytoplasmic. Residues methionine 252 to leucine 272 form a helical membrane-spanning segment. The Extracellular segment spans residues glycine 273–leucine 290. The helical transmembrane segment at alanine 291–leucine 310 threads the bilayer. Residues asparagine 311–proline 384 lie on the Cytoplasmic side of the membrane. Cysteine 324 carries S-palmitoyl cysteine lipidation.

Belongs to the G-protein coupled receptor 1 family.

The protein resides in the cell membrane. Its function is as follows. This is a receptor for the tachykinin neuropeptide substance K (neurokinin A). It is associated with G proteins that activate a phosphatidylinositol-calcium second messenger system. The rank order of affinity of this receptor to tachykinins is: substance K &gt; neuromedin-K &gt; substance P. In Mesocricetus auratus (Golden hamster), this protein is Substance-K receptor (TACR2).